The following is a 111-amino-acid chain: T cell receptor alpha variable 18 (111 aa).

Residues 1–20 form the signal peptide; it reads MLSASCSGLVILLIFRRTSG. The Ig-like domain occupies 21–111; sequence DSVTQTEGPV…DSAVYYCALR (91 aa). A glycan (N-linked (GlcNAc...) asparagine) is linked at Asn41. Cysteines 42 and 108 form a disulfide.

Alpha-beta TR is a heterodimer composed of an alpha and beta chain; disulfide-linked. The alpha-beta TR is associated with the transmembrane signaling CD3 coreceptor proteins to form the TR-CD3 (TcR or TCR). The assembly of alpha-beta TR heterodimers with CD3 occurs in the endoplasmic reticulum where a single alpha-beta TR heterodimer associates with one CD3D-CD3E heterodimer, one CD3G-CD3E heterodimer and one CD247 homodimer forming a stable octameric structure. CD3D-CD3E and CD3G-CD3E heterodimers preferentially associate with TR alpha and TR beta chains, respectively. The association of the CD247 homodimer is the last step of TcR assembly in the endoplasmic reticulum and is required for transport to the cell surface.

Its subcellular location is the cell membrane. Its function is as follows. V region of the variable domain of T cell receptor (TR) alpha chain that participates in the antigen recognition. Alpha-beta T cell receptors are antigen specific receptors which are essential to the immune response and are present on the cell surface of T lymphocytes. Recognize peptide-major histocompatibility (MH) (pMH) complexes that are displayed by antigen presenting cells (APC), a prerequisite for efficient T cell adaptive immunity against pathogens. Binding of alpha-beta TR to pMH complex initiates TR-CD3 clustering on the cell surface and intracellular activation of LCK that phosphorylates the ITAM motifs of CD3G, CD3D, CD3E and CD247 enabling the recruitment of ZAP70. In turn ZAP70 phosphorylates LAT, which recruits numerous signaling molecules to form the LAT signalosome. The LAT signalosome propagates signal branching to three major signaling pathways, the calcium, the mitogen-activated protein kinase (MAPK) kinase and the nuclear factor NF-kappa-B (NF-kB) pathways, leading to the mobilization of transcription factors that are critical for gene expression and essential for T cell growth and differentiation. The T cell repertoire is generated in the thymus, by V-(D)-J rearrangement. This repertoire is then shaped by intrathymic selection events to generate a peripheral T cell pool of self-MH restricted, non-autoaggressive T cells. Post-thymic interaction of alpha-beta TR with the pMH complexes shapes TR structural and functional avidity. This Homo sapiens (Human) protein is T cell receptor alpha variable 18.